A 352-amino-acid polypeptide reads, in one-letter code: Phosphoribosylformylglycinamidine cyclo-ligase (352 aa).

This sequence belongs to the AIR synthase family.

It localises to the cytoplasm. It catalyses the reaction 2-formamido-N(1)-(5-O-phospho-beta-D-ribosyl)acetamidine + ATP = 5-amino-1-(5-phospho-beta-D-ribosyl)imidazole + ADP + phosphate + H(+). It participates in purine metabolism; IMP biosynthesis via de novo pathway; 5-amino-1-(5-phospho-D-ribosyl)imidazole from N(2)-formyl-N(1)-(5-phospho-D-ribosyl)glycinamide: step 2/2. The protein is Phosphoribosylformylglycinamidine cyclo-ligase of Ectopseudomonas mendocina (strain ymp) (Pseudomonas mendocina).